A 1061-amino-acid polypeptide reads, in one-letter code: Transcription factor GTE10 (1061 aa).

Disordered stretches follow at residues 32–56 (ERMN…NNGV) and 106–152 (NDHS…RLNV). The segment covering 109-118 (SCSDGPRRPP) has biased composition (basic and acidic residues). The region spanning 156-262 (YTVASVMKEC…KYFESGWKSI (107 aa)) is the Bromo domain. In terms of domain architecture, NET spans 304–386 (KLRVEPAKLV…DYLREKKKSM (83 aa)). Disordered stretches follow at residues 443 to 518 (ACRN…LNEL), 538 to 558 (VPDE…PDKR), 606 to 645 (KERL…ARQA), and 710 to 1033 (HLGL…GNGK). Over residues 448 to 476 (ESSSSSSSSSESGSSSSDSDSCSSSGSET) the composition is skewed to low complexity. Residues 477 to 506 (DSIKASKPTSREEKKQPGVGIDKKEDDSNS) are compositionally biased toward basic and acidic residues. Residues 588–658 (PEKLRIEREE…MEKTVEINEG (71 aa)) adopt a coiled-coil conformation. Basic and acidic residues-rich tracts occupy residues 733 to 755 (RKVE…RVEG), 770 to 792 (EAHD…ERQL), 828 to 852 (EEVH…EDPR), 860 to 883 (VSEK…REEQ), and 912 to 929 (LSLD…REEG). The stretch at 852–893 (RASGNEESVSEKAQDYENQRDEKINQSEREEQLENVLEQESS) forms a coiled coil. Polar residues predominate over residues 940 to 949 (LVSQKTQDNG). Composition is skewed to basic and acidic residues over residues 952-962 (EDEKSINKIEG) and 990-1002 (GEQK…KGVE).

In terms of assembly, interacts with TIP/NAC091. As to expression, widely expressed in all tissues.

Its subcellular location is the nucleus. Acts as a negative regulator in plant response to changes in environmental conditions through the control of ABA-regulated gene expression. The protein is Transcription factor GTE10 (GTE10) of Arabidopsis thaliana (Mouse-ear cress).